A 581-amino-acid chain; its full sequence is Netrin-3 (581 aa).

Positions 1-15 (LRLLLTTSVLRLARA) are cleaved as a signal peptide. The Laminin N-terminal domain occupies 35-261 (APRRCIPEFV…SVGELQVGGR (227 aa)). Asn88 and Asn103 each carry an N-linked (GlcNAc...) asparagine glycan. Disulfide bonds link Cys91-Cys124, Cys262-Cys271, Cys264-Cys281, Cys283-Cys292, Cys295-Cys315, Cys318-Cys327, Cys320-Cys345, Cys348-Cys357, Cys360-Cys378, Cys381-Cys393, Cys383-Cys400, Cys402-Cys411, Cys414-Cys428, Cys449-Cys521, and Cys468-Cys578. Laminin EGF-like domains lie at 262 to 317 (CKCN…ECLA), 318 to 380 (CNCN…ACKA), and 381 to 430 (CDCH…PCIK). An N-linked (GlcNAc...) asparagine glycan is attached at Asn394. Residues 449-578 (CDSYCKPAKG…LQRREKKGKC (130 aa)) enclose the NTR domain. A Cell attachment site motif is present at residues 507–509 (RGD). The N-linked (GlcNAc...) asparagine glycan is linked to Asn540.

It is found in the secreted. It localises to the extracellular space. The protein localises to the extracellular matrix. In terms of biological role, netrins control guidance of CNS commissural axons and peripheral motor axons. The protein is Netrin-3 (NTN3) of Gallus gallus (Chicken).